The sequence spans 76 residues: DNA-directed RNA polymerase subunit Rpo10 (76 aa).

Zn(2+)-binding residues include cysteine 16, cysteine 19, cysteine 53, and cysteine 54.

The protein belongs to the archaeal Rpo10/eukaryotic RPB10 RNA polymerase subunit family. As to quaternary structure, part of the RNA polymerase complex. The cofactor is Zn(2+).

The protein localises to the cytoplasm. It carries out the reaction RNA(n) + a ribonucleoside 5'-triphosphate = RNA(n+1) + diphosphate. DNA-dependent RNA polymerase (RNAP) catalyzes the transcription of DNA into RNA using the four ribonucleoside triphosphates as substrates. The polypeptide is DNA-directed RNA polymerase subunit Rpo10 (Archaeoglobus fulgidus (strain ATCC 49558 / DSM 4304 / JCM 9628 / NBRC 100126 / VC-16)).